Reading from the N-terminus, the 154-residue chain is Myoglobin-2 (154 aa).

Residues 2–148 (GLSDGEWQLV…FRKDIATKYK (147 aa)) form the Globin domain. H65 lines the nitrite pocket. Residue H65 participates in O2 binding. H94 contacts heme b.

The protein belongs to the globin family. Monomeric.

Its subcellular location is the cytoplasm. It localises to the sarcoplasm. It catalyses the reaction Fe(III)-heme b-[protein] + nitric oxide + H2O = Fe(II)-heme b-[protein] + nitrite + 2 H(+). The enzyme catalyses H2O2 + AH2 = A + 2 H2O. In terms of biological role, monomeric heme protein which primary function is to store oxygen and facilitate its diffusion within muscle tissues. Reversibly binds oxygen through a pentacoordinated heme iron and enables its timely and efficient release as needed during periods of heightened demand. Depending on the oxidative conditions of tissues and cells, and in addition to its ability to bind oxygen, it also has a nitrite reductase activity whereby it regulates the production of bioactive nitric oxide. Under stress conditions, like hypoxia and anoxia, it also protects cells against reactive oxygen species thanks to its pseudoperoxidase activity. The chain is Myoglobin-2 (MB2) from Stenella attenuata (Pantropical spotted dolphin).